A 571-amino-acid chain; its full sequence is Mannan endo-1,4-beta-mannosidase B (571 aa).

An N-terminal signal peptide occupies residues 1 to 19 (MNSLSLLLFCIFFVFSTFA). The CBM6 domain maps to 22–141 (VYYEAENGKL…WMWVDAFVIN (120 aa)). A GH26 domain is found at 165 to 459 (PAAKKLYDFL…FTHKTVMNMD (295 aa)). Substrate is bound at residue Trp-286. Catalysis depends on Glu-319, which acts as the Proton donor. Residues Trp-324 and Tyr-379 each contribute to the substrate site. Glu-407 functions as the Nucleophile in the catalytic mechanism. 2 CBM10 domains span residues 491-527 (ECFSIPLGYPCCKGNTVVYTDNDGDWGVENNEWCGIG) and 534-571 (VCWSEALGYPCCVSSSDVYYTDNDGEWGVENGDWCGII).

Belongs to the glycosyl hydrolase 26 family.

It catalyses the reaction Random hydrolysis of (1-&gt;4)-beta-D-mannosidic linkages in mannans, galactomannans and glucomannans.. This Piromyces sp protein is Mannan endo-1,4-beta-mannosidase B (MANB).